A 329-amino-acid polypeptide reads, in one-letter code: Ketol-acid reductoisomerase (NADP(+)) (329 aa).

In terms of domain architecture, KARI N-terminal Rossmann spans 1-181; it reads MKIYYDQDAD…GGTRGGVLTT (181 aa). Residues 24–27, R47, and 82–85 contribute to the NADP(+) site; these read YGSQ and DQHQ. The active site involves H107. Position 133 (G133) interacts with NADP(+). One can recognise a KARI C-terminal knotted domain in the interval 182 to 327; sequence TFKEETETDL…AKLRGMMSWL (146 aa). D190, E194, E226, and E230 together coordinate Mg(2+). S251 lines the substrate pocket.

It belongs to the ketol-acid reductoisomerase family. Mg(2+) serves as cofactor.

It carries out the reaction (2R)-2,3-dihydroxy-3-methylbutanoate + NADP(+) = (2S)-2-acetolactate + NADPH + H(+). It catalyses the reaction (2R,3R)-2,3-dihydroxy-3-methylpentanoate + NADP(+) = (S)-2-ethyl-2-hydroxy-3-oxobutanoate + NADPH + H(+). It functions in the pathway amino-acid biosynthesis; L-isoleucine biosynthesis; L-isoleucine from 2-oxobutanoate: step 2/4. It participates in amino-acid biosynthesis; L-valine biosynthesis; L-valine from pyruvate: step 2/4. In terms of biological role, involved in the biosynthesis of branched-chain amino acids (BCAA). Catalyzes an alkyl-migration followed by a ketol-acid reduction of (S)-2-acetolactate (S2AL) to yield (R)-2,3-dihydroxy-isovalerate. In the isomerase reaction, S2AL is rearranged via a Mg-dependent methyl migration to produce 3-hydroxy-3-methyl-2-ketobutyrate (HMKB). In the reductase reaction, this 2-ketoacid undergoes a metal-dependent reduction by NADPH to yield (R)-2,3-dihydroxy-isovalerate. The polypeptide is Ketol-acid reductoisomerase (NADP(+)) (Solidesulfovibrio magneticus (strain ATCC 700980 / DSM 13731 / RS-1) (Desulfovibrio magneticus)).